The sequence spans 114 residues: Transmembrane protein 256 (114 aa).

Residues 1–25 form the signal peptide; sequence MNAASLVQRVAGISGALAVAAGAYG. Residues 26–64 are Extracellular-facing; it reads AHGFRRSEASDYQRELFDTANKYHFYHSLALLGAARCRK. The chain crosses the membrane as a helical span at residues 65–85; that stretch reads PALAGVILLTGMGCFCGPLYH. At 86–93 the chain is on the cytoplasmic side; the sequence is QPLTNDPS. The chain crosses the membrane as a helical span at residues 94–114; sequence FSKLAPIGGSLLIVGWAAMAL.

The protein belongs to the TMEM256 family.

It localises to the membrane. This is Transmembrane protein 256 (tmem256) from Danio rerio (Zebrafish).